We begin with the raw amino-acid sequence, 408 residues long: Zinc finger protein 764 (408 aa).

Residues 26–97 form the KRAB domain; that stretch reads VSFADVAVYF…AAQDPEVAKC (72 aa). Residues 91 to 167 are disordered; that stretch reads DPEVAKCQTQ…GRPSLCAHPP (77 aa). C2H2-type zinc fingers lie at residues 175–197, 203–225, 231–253, 259–281, 287–309, 315–337, and 343–365; these read HGCY…VYSH, FHCT…RAIH, HRCL…LRVH, YGCA…RRVH, FPCP…VRTH, YPCP…RRTH, and YPCP…QWVH.

Belongs to the krueppel C2H2-type zinc-finger protein family. Interacts (via KRAB domain) with NR3C1/GR (via NR LBD domain); the interaction regulates transcription factor activity of NR3C1 by directing its actions toward certain biologic pathways.

Its subcellular location is the nucleus. In terms of biological role, zinc finger protein that functions as a cofactor for steroid hormone receptors, such as NR3C1/GR. Directs NR3C1/GR transcriptional activity toward specific biologic pathways by changing NR3C1/GR binding and transcriptional activity on the glucocorticoid-responsive genes. The protein is Zinc finger protein 764 of Homo sapiens (Human).